The sequence spans 337 residues: Annexin E1 (337 aa).

Annexin repeat units follow at residues 10–80 (TGVT…MLYK), 81–154 (PRAQ…AVAT), 161–238 (DTHE…LAHD), and 242–312 (DPCC…LLWE).

Belongs to the annexin family.

It is found in the cell projection. The protein localises to the cilium. It localises to the flagellum. Its function is as follows. May function as a calcium-regulated structural element linking phospholipid bilayer and underlying axoneme. This chain is Annexin E1 (ANXE1), found in Giardia intestinalis (Giardia lamblia).